Here is a 277-residue protein sequence, read N- to C-terminus: Ethanolamine ammonia-lyase small subunit (277 aa).

Positions 164, 185, and 214 each coordinate adenosylcob(III)alamin.

It belongs to the EutC family. In terms of assembly, the basic unit is a heterodimer which dimerizes to form tetramers. The heterotetramers trimerize; 6 large subunits form a core ring with 6 small subunits projecting outwards. Adenosylcob(III)alamin is required as a cofactor.

It is found in the bacterial microcompartment. It catalyses the reaction ethanolamine = acetaldehyde + NH4(+). Its pathway is amine and polyamine degradation; ethanolamine degradation. Functionally, catalyzes the deamination of various vicinal amino-alcohols to oxo compounds. Allows this organism to utilize ethanolamine as the sole source of nitrogen and carbon in the presence of external vitamin B12. The protein is Ethanolamine ammonia-lyase small subunit of Pseudomonas fluorescens (strain SBW25).